We begin with the raw amino-acid sequence, 174 residues long: Co-chaperone protein HscB homolog (174 aa).

Positions 2 to 74 (NYFELFKFSP…IRRAEHMLSL (73 aa)) constitute a J domain.

It belongs to the HscB family. As to quaternary structure, interacts with HscA and stimulates its ATPase activity.

Its function is as follows. Co-chaperone involved in the maturation of iron-sulfur cluster-containing proteins. Seems to help targeting proteins to be folded toward HscA. This Shewanella baltica (strain OS185) protein is Co-chaperone protein HscB homolog.